An 86-amino-acid polypeptide reads, in one-letter code: Cytochrome c oxidase subunit 12, mitochondrial (86 aa).

A CHCH domain is found at Thr-30–Trp-73. The Cx9C motif motif lies at Cys-33 to Cys-43. 2 disulfide bridges follow: Cys-33/Cys-65 and Cys-43/Cys-54. Positions Cys-54 to Cys-65 match the Cx10C motif motif.

It belongs to the cytochrome c oxidase subunit 6B family. Component of the cytochrome c oxidase (complex IV, CIV), a multisubunit enzyme composed of a catalytic core of 3 subunits and several supernumerary subunits. The complex exists as a monomer or a dimer and forms supercomplexes (SCs) in the inner mitochondrial membrane with ubiquinol-cytochrome c oxidoreductase (cytochrome b-c1 complex, complex III, CIII).

Its subcellular location is the mitochondrion inner membrane. It functions in the pathway energy metabolism; oxidative phosphorylation. Functionally, component of the cytochrome c oxidase, the last enzyme in the mitochondrial electron transport chain which drives oxidative phosphorylation. The respiratory chain contains 3 multisubunit complexes succinate dehydrogenase (complex II, CII), ubiquinol-cytochrome c oxidoreductase (cytochrome b-c1 complex, complex III, CIII) and cytochrome c oxidase (complex IV, CIV), that cooperate to transfer electrons derived from NADH and succinate to molecular oxygen, creating an electrochemical gradient over the inner membrane that drives transmembrane transport and the ATP synthase. Cytochrome c oxidase is the component of the respiratory chain that catalyzes the reduction of oxygen to water. Electrons originating from reduced cytochrome c in the intermembrane space (IMS) are transferred via the dinuclear copper A center (CU(A)) of subunit 2 and heme A of subunit 1 to the active site in subunit 1, a binuclear center (BNC) formed by heme A3 and copper B (CU(B)). The BNC reduces molecular oxygen to 2 water molecules using 4 electrons from cytochrome c in the IMS and 4 protons from the mitochondrial matrix. This is Cytochrome c oxidase subunit 12, mitochondrial (cox12) from Schizosaccharomyces pombe (strain 972 / ATCC 24843) (Fission yeast).